We begin with the raw amino-acid sequence, 346 residues long: Holliday junction branch migration complex subunit RuvB (346 aa).

The large ATPase domain (RuvB-L) stretch occupies residues methionine 1–tyrosine 182. Residues leucine 21, arginine 22, glycine 63, lysine 66, threonine 67, threonine 68, glutamate 129 to tyrosine 131, arginine 172, tyrosine 182, and arginine 219 each bind ATP. Threonine 67 serves as a coordination point for Mg(2+). A small ATPAse domain (RuvB-S) region spans residues threonine 183–leucine 253. Residues asparagine 256–aspartate 346 are head domain (RuvB-H). Residues arginine 292, arginine 311, and arginine 316 each contribute to the DNA site.

This sequence belongs to the RuvB family. In terms of assembly, homohexamer. Forms an RuvA(8)-RuvB(12)-Holliday junction (HJ) complex. HJ DNA is sandwiched between 2 RuvA tetramers; dsDNA enters through RuvA and exits via RuvB. An RuvB hexamer assembles on each DNA strand where it exits the tetramer. Each RuvB hexamer is contacted by two RuvA subunits (via domain III) on 2 adjacent RuvB subunits; this complex drives branch migration. In the full resolvosome a probable DNA-RuvA(4)-RuvB(12)-RuvC(2) complex forms which resolves the HJ.

The protein resides in the cytoplasm. The enzyme catalyses ATP + H2O = ADP + phosphate + H(+). Its function is as follows. The RuvA-RuvB-RuvC complex processes Holliday junction (HJ) DNA during genetic recombination and DNA repair, while the RuvA-RuvB complex plays an important role in the rescue of blocked DNA replication forks via replication fork reversal (RFR). RuvA specifically binds to HJ cruciform DNA, conferring on it an open structure. The RuvB hexamer acts as an ATP-dependent pump, pulling dsDNA into and through the RuvAB complex. RuvB forms 2 homohexamers on either side of HJ DNA bound by 1 or 2 RuvA tetramers; 4 subunits per hexamer contact DNA at a time. Coordinated motions by a converter formed by DNA-disengaged RuvB subunits stimulates ATP hydrolysis and nucleotide exchange. Immobilization of the converter enables RuvB to convert the ATP-contained energy into a lever motion, pulling 2 nucleotides of DNA out of the RuvA tetramer per ATP hydrolyzed, thus driving DNA branch migration. The RuvB motors rotate together with the DNA substrate, which together with the progressing nucleotide cycle form the mechanistic basis for DNA recombination by continuous HJ branch migration. Branch migration allows RuvC to scan DNA until it finds its consensus sequence, where it cleaves and resolves cruciform DNA. The chain is Holliday junction branch migration complex subunit RuvB from Rhizobium etli (strain ATCC 51251 / DSM 11541 / JCM 21823 / NBRC 15573 / CFN 42).